A 225-amino-acid polypeptide reads, in one-letter code: Phosphoglycolate phosphatase (225 aa).

Residue Asp-11 is the Nucleophile of the active site. The Mg(2+) site is built by Asp-11, Asp-13, and Asp-174.

Belongs to the HAD-like hydrolase superfamily. CbbY/CbbZ/Gph/YieH family. Mg(2+) is required as a cofactor.

It carries out the reaction 2-phosphoglycolate + H2O = glycolate + phosphate. It functions in the pathway organic acid metabolism; glycolate biosynthesis; glycolate from 2-phosphoglycolate: step 1/1. In terms of biological role, specifically catalyzes the dephosphorylation of 2-phosphoglycolate. Is involved in the dissimilation of the intracellular 2-phosphoglycolate formed during the DNA repair of 3'-phosphoglycolate ends, a major class of DNA lesions induced by oxidative stress. The sequence is that of Phosphoglycolate phosphatase from Nitrosococcus oceani (strain ATCC 19707 / BCRC 17464 / JCM 30415 / NCIMB 11848 / C-107).